Reading from the N-terminus, the 502-residue chain is Lipoprotein LipO (502 aa).

An N-terminal signal peptide occupies residues 1–21; it reads MKIRMRKKWMALPLAAMMIAG. A lipid anchor (N-palmitoyl cysteine) is attached at Cys-22. The S-diacylglycerol cysteine moiety is linked to residue Cys-22.

The protein localises to the cell membrane. This chain is Lipoprotein LipO (lipO), found in Bacillus subtilis (strain 168).